Here is a 254-residue protein sequence, read N- to C-terminus: Pyridoxine 5'-phosphate synthase (254 aa).

Asn12 contacts 3-amino-2-oxopropyl phosphate. 14–15 (DH) is a 1-deoxy-D-xylulose 5-phosphate binding site. Arg23 lines the 3-amino-2-oxopropyl phosphate pocket. His48 functions as the Proton acceptor in the catalytic mechanism. The 1-deoxy-D-xylulose 5-phosphate site is built by Arg50 and His55. The active-site Proton acceptor is the Glu75. Thr105 contributes to the 1-deoxy-D-xylulose 5-phosphate binding site. Residue His199 is the Proton donor of the active site. 3-amino-2-oxopropyl phosphate is bound by residues Gly200 and 221–222 (GF).

This sequence belongs to the PNP synthase family. Homooctamer; tetramer of dimers.

It localises to the cytoplasm. It carries out the reaction 3-amino-2-oxopropyl phosphate + 1-deoxy-D-xylulose 5-phosphate = pyridoxine 5'-phosphate + phosphate + 2 H2O + H(+). It functions in the pathway cofactor biosynthesis; pyridoxine 5'-phosphate biosynthesis; pyridoxine 5'-phosphate from D-erythrose 4-phosphate: step 5/5. In terms of biological role, catalyzes the complicated ring closure reaction between the two acyclic compounds 1-deoxy-D-xylulose-5-phosphate (DXP) and 3-amino-2-oxopropyl phosphate (1-amino-acetone-3-phosphate or AAP) to form pyridoxine 5'-phosphate (PNP) and inorganic phosphate. The protein is Pyridoxine 5'-phosphate synthase of Rhodopseudomonas palustris (strain ATCC BAA-98 / CGA009).